Here is a 393-residue protein sequence, read N- to C-terminus: Methylthioribose kinase (393 aa).

Residues N38, K53, and 107-109 (EDL) each bind ATP. Residue D225 coordinates substrate. 242 to 244 (DPE) provides a ligand contact to ATP. R332 serves as a coordination point for substrate.

Belongs to the methylthioribose kinase family. In terms of assembly, homodimer.

The enzyme catalyses 5-(methylsulfanyl)-D-ribose + ATP = 5-(methylsulfanyl)-alpha-D-ribose 1-phosphate + ADP + H(+). The protein operates within amino-acid biosynthesis; L-methionine biosynthesis via salvage pathway; S-methyl-5-thio-alpha-D-ribose 1-phosphate from S-methyl-5'-thioadenosine (hydrolase route): step 2/2. Its function is as follows. Catalyzes the phosphorylation of methylthioribose into methylthioribose-1-phosphate. The sequence is that of Methylthioribose kinase from Bacillus cereus (strain G9842).